The chain runs to 169 residues: 6,7-dimethyl-8-ribityllumazine synthase (169 aa).

Residues tyrosine 30, 61 to 63, and 90 to 92 each bind 5-amino-6-(D-ribitylamino)uracil; these read ALE and CVI. 95-96 lines the (2S)-2-hydroxy-3-oxobutyl phosphate pocket; sequence ET. The Proton donor role is filled by histidine 98. Asparagine 123 is a 5-amino-6-(D-ribitylamino)uracil binding site. (2S)-2-hydroxy-3-oxobutyl phosphate is bound at residue arginine 137.

The protein belongs to the DMRL synthase family.

The enzyme catalyses (2S)-2-hydroxy-3-oxobutyl phosphate + 5-amino-6-(D-ribitylamino)uracil = 6,7-dimethyl-8-(1-D-ribityl)lumazine + phosphate + 2 H2O + H(+). The protein operates within cofactor biosynthesis; riboflavin biosynthesis; riboflavin from 2-hydroxy-3-oxobutyl phosphate and 5-amino-6-(D-ribitylamino)uracil: step 1/2. Functionally, catalyzes the formation of 6,7-dimethyl-8-ribityllumazine by condensation of 5-amino-6-(D-ribitylamino)uracil with 3,4-dihydroxy-2-butanone 4-phosphate. This is the penultimate step in the biosynthesis of riboflavin. The polypeptide is 6,7-dimethyl-8-ribityllumazine synthase (Methylorubrum populi (strain ATCC BAA-705 / NCIMB 13946 / BJ001) (Methylobacterium populi)).